Consider the following 207-residue polypeptide: Thiamine-phosphate synthase (207 aa).

4-amino-2-methyl-5-(diphosphooxymethyl)pyrimidine contacts are provided by residues 36–40 and N68; that span reads QLRMK. Residues D69 and D88 each contribute to the Mg(2+) site. S106 serves as a coordination point for 4-amino-2-methyl-5-(diphosphooxymethyl)pyrimidine. 132–134 is a 2-[(2R,5Z)-2-carboxy-4-methylthiazol-5(2H)-ylidene]ethyl phosphate binding site; sequence TNT. Residue K135 participates in 4-amino-2-methyl-5-(diphosphooxymethyl)pyrimidine binding. Residues G162 and 182–183 contribute to the 2-[(2R,5Z)-2-carboxy-4-methylthiazol-5(2H)-ylidene]ethyl phosphate site; that span reads VS.

This sequence belongs to the thiamine-phosphate synthase family. Mg(2+) serves as cofactor.

The catalysed reaction is 2-[(2R,5Z)-2-carboxy-4-methylthiazol-5(2H)-ylidene]ethyl phosphate + 4-amino-2-methyl-5-(diphosphooxymethyl)pyrimidine + 2 H(+) = thiamine phosphate + CO2 + diphosphate. The enzyme catalyses 2-(2-carboxy-4-methylthiazol-5-yl)ethyl phosphate + 4-amino-2-methyl-5-(diphosphooxymethyl)pyrimidine + 2 H(+) = thiamine phosphate + CO2 + diphosphate. It catalyses the reaction 4-methyl-5-(2-phosphooxyethyl)-thiazole + 4-amino-2-methyl-5-(diphosphooxymethyl)pyrimidine + H(+) = thiamine phosphate + diphosphate. It functions in the pathway cofactor biosynthesis; thiamine diphosphate biosynthesis; thiamine phosphate from 4-amino-2-methyl-5-diphosphomethylpyrimidine and 4-methyl-5-(2-phosphoethyl)-thiazole: step 1/1. Functionally, condenses 4-methyl-5-(beta-hydroxyethyl)thiazole monophosphate (THZ-P) and 2-methyl-4-amino-5-hydroxymethyl pyrimidine pyrophosphate (HMP-PP) to form thiamine monophosphate (TMP). This Methanococcus maripaludis (strain DSM 14266 / JCM 13030 / NBRC 101832 / S2 / LL) protein is Thiamine-phosphate synthase.